The sequence spans 104 residues: DNA-directed RNA polymerase subunit omega (104 aa).

Belongs to the RNA polymerase subunit omega family. The RNAP catalytic core consists of 2 alpha, 1 beta, 1 beta' and 1 omega subunit. When a sigma factor is associated with the core the holoenzyme is formed, which can initiate transcription.

It catalyses the reaction RNA(n) + a ribonucleoside 5'-triphosphate = RNA(n+1) + diphosphate. Its function is as follows. Promotes RNA polymerase assembly. Latches the N- and C-terminal regions of the beta' subunit thereby facilitating its interaction with the beta and alpha subunits. The chain is DNA-directed RNA polymerase subunit omega from Streptococcus thermophilus (strain CNRZ 1066).